Reading from the N-terminus, the 255-residue chain is Cysteine protease avirulence protein AvrRpt2 (255 aa).

A disordered region spans residues 1 to 50 (MKIAPVAINHSPLSREVPSHAAPTQAKQTNLQSEAGDLDARKSSASSPET). The propeptide at 1 to 71 (MKIAPVAINH…RHKIEVPAFG (71 aa)) is removed in mature form. Residues 70–71 (FG) are determinants of cleavage specificity. The tract at residues 76-100 (KKSSKHETGGSSANADSSSVASDST) is disordered. Low complexity predominate over residues 86–98 (SSANADSSSVASD). C122 acts as the Nucleophile in catalysis. Active-site residues include H208 and D226.

This sequence belongs to the peptidase C70 family. As to quaternary structure, interacts physically with plant cell ROC1 (Arabidopsis single-domain cyclophilin) and RIN4. Autocleaved inside plant cells upon activation by cyclophilin. Cleavage is crucial in subcellular location and in eliciting HR. Inhibited by cyclosporin A (cyclophilin inhibitor).

Its subcellular location is the secreted. It localises to the host cell membrane. Effector protein involved in gene-for-gene resistance in plants expressing RPS2. Its thiol protease activity is required for the degradation of plant cell RIN4 and consequent activation of RPS2 during bacterial infection. The activation of RPS2 is sufficient for the induction of hypersensitive response (HR) and plant resistance. Cleavage of RIN4 by AvrRpt2 also interferes with RPM1-mediated resistance activated by either AvrRpm1 or AvrB. Contributes to virulence in plants lacking the resistance protein RPS2 promoting pathogen growth and disease symptoms. Inhibits PAMP (pathogen-associated molecular patterns)-induced signaling compromising the host's basal defense system. Blocks plant callose deposition, flg22 (a peptide corresponding to the most conserved domain of flagellin) induced accumulation of PR-1, PR-2 and PR-5 and activation of GST6 transcription. The mechanism of virulence is unknown, but this activity is independent of ethylene and salicylic acid response pathways and independent of RIN4 disappearance. The chain is Cysteine protease avirulence protein AvrRpt2 (avrRpt2) from Pseudomonas syringae pv. tomato.